We begin with the raw amino-acid sequence, 294 residues long: 4-hydroxy-tetrahydrodipicolinate synthase (294 aa).

Threonine 47 is a pyruvate binding site. Residue tyrosine 135 is the Proton donor/acceptor of the active site. The active-site Schiff-base intermediate with substrate is lysine 163. A pyruvate-binding site is contributed by threonine 205.

Belongs to the DapA family. In terms of assembly, homotetramer; dimer of dimers.

Its subcellular location is the cytoplasm. The catalysed reaction is L-aspartate 4-semialdehyde + pyruvate = (2S,4S)-4-hydroxy-2,3,4,5-tetrahydrodipicolinate + H2O + H(+). Its pathway is amino-acid biosynthesis; L-lysine biosynthesis via DAP pathway; (S)-tetrahydrodipicolinate from L-aspartate: step 3/4. Its function is as follows. Catalyzes the condensation of (S)-aspartate-beta-semialdehyde [(S)-ASA] and pyruvate to 4-hydroxy-tetrahydrodipicolinate (HTPA). The chain is 4-hydroxy-tetrahydrodipicolinate synthase from Rickettsia conorii (strain ATCC VR-613 / Malish 7).